Reading from the N-terminus, the 1025-residue chain is Glycine dehydrogenase (decarboxylating), mitochondrial (1025 aa).

The transit peptide at 1–35 directs the protein to the mitochondrion; that stretch reads MQLCARAWGLRLGRGAGGGHRLARGTGLSWAQRSR. The interval 16 to 51 is disordered; sequence AGGGHRLARGTGLSWAQRSRDSSGGGGGGGGGDRGA. Residues 38-50 show a composition bias toward gly residues; the sequence is SGGGGGGGGGDRG. An N6-acetyllysine mark is found at K452, K519, K653, and K669. Position 759 is an N6-(pyridoxal phosphate)lysine (K759).

The protein belongs to the GcvP family. In terms of assembly, interacts with GCSH. Homodimer. The glycine cleavage system is composed of four proteins: P (GLDC), T (GCST), L (DLD) and H (GCSH). Pyridoxal 5'-phosphate is required as a cofactor.

It localises to the mitochondrion. It carries out the reaction N(6)-[(R)-lipoyl]-L-lysyl-[glycine-cleavage complex H protein] + glycine + H(+) = N(6)-[(R)-S(8)-aminomethyldihydrolipoyl]-L-lysyl-[glycine-cleavage complex H protein] + CO2. Stimulated by lipoic acid. Inhibited in presence of methylamine. Its function is as follows. The glycine cleavage system catalyzes the degradation of glycine. The P protein (GLDC) binds the alpha-amino group of glycine through its pyridoxal phosphate cofactor; CO(2) is released and the remaining methylamine moiety is then transferred to the lipoamide cofactor of the H protein (GCSH). In Mus musculus (Mouse), this protein is Glycine dehydrogenase (decarboxylating), mitochondrial.